We begin with the raw amino-acid sequence, 361 residues long: Isocitrate dehydrogenase [NAD] subunit 1, mitochondrial (361 aa).

Residues 1-12 (MLRQGIAAQKKS) constitute a mitochondrion transit peptide. Substrate contacts are provided by R110, R141, and D229. D229 is a Mg(2+) binding site.

Belongs to the isocitrate and isopropylmalate dehydrogenases family. As to quaternary structure, octamer of two non-identical subunits IDH1 and IDH2. Mg(2+) is required as a cofactor. It depends on Mn(2+) as a cofactor.

Its subcellular location is the mitochondrion. It catalyses the reaction D-threo-isocitrate + NAD(+) = 2-oxoglutarate + CO2 + NADH. Its function is as follows. Performs an essential role in the oxidative function of the citric acid cycle. The chain is Isocitrate dehydrogenase [NAD] subunit 1, mitochondrial (IDH1) from Kluyveromyces lactis (strain ATCC 8585 / CBS 2359 / DSM 70799 / NBRC 1267 / NRRL Y-1140 / WM37) (Yeast).